The sequence spans 237 residues: Orotidine 5'-phosphate decarboxylase (237 aa).

Substrate is bound by residues aspartate 17, lysine 39, aspartate 66–threonine 75, threonine 121, arginine 182, glutamine 191, glycine 211, and arginine 212. The active-site Proton donor is the lysine 68.

The protein belongs to the OMP decarboxylase family. Type 1 subfamily. Homodimer.

It catalyses the reaction orotidine 5'-phosphate + H(+) = UMP + CO2. It functions in the pathway pyrimidine metabolism; UMP biosynthesis via de novo pathway; UMP from orotate: step 2/2. In terms of biological role, catalyzes the decarboxylation of orotidine 5'-monophosphate (OMP) to uridine 5'-monophosphate (UMP). This is Orotidine 5'-phosphate decarboxylase from Rhodopseudomonas palustris (strain ATCC BAA-98 / CGA009).